A 109-amino-acid polypeptide reads, in one-letter code: MIKLKVKKGDEVIVITGKHKGKKGKILKVFPEDSKVIVAGVNLVKKHTKPNQMSEGGIRTKELPIHISNIAHIDPKTGRPTKVVFKFLEDGSKVRVAKKSGEIIGKEGK.

It belongs to the universal ribosomal protein uL24 family. In terms of assembly, part of the 50S ribosomal subunit.

In terms of biological role, one of two assembly initiator proteins, it binds directly to the 5'-end of the 23S rRNA, where it nucleates assembly of the 50S subunit. One of the proteins that surrounds the polypeptide exit tunnel on the outside of the subunit. This is Large ribosomal subunit protein uL24 from Rickettsia canadensis (strain McKiel).